Reading from the N-terminus, the 257-residue chain is Phosphate import ATP-binding protein PstB (257 aa).

The 242-residue stretch at 11 to 252 folds into the ABC transporter domain; that stretch reads IQVRNLNFYY…PAKKQTEDYI (242 aa). 43–50 contributes to the ATP binding site; sequence GPSGCGKS.

The protein belongs to the ABC transporter superfamily. Phosphate importer (TC 3.A.1.7) family. The complex is composed of two ATP-binding proteins (PstB), two transmembrane proteins (PstC and PstA) and a solute-binding protein (PstS).

The protein resides in the cell inner membrane. The enzyme catalyses phosphate(out) + ATP + H2O = ADP + 2 phosphate(in) + H(+). Part of the ABC transporter complex PstSACB involved in phosphate import. Responsible for energy coupling to the transport system. In Escherichia coli O6:K15:H31 (strain 536 / UPEC), this protein is Phosphate import ATP-binding protein PstB.